We begin with the raw amino-acid sequence, 534 residues long: Prolyl 4-hydroxylase subunit alpha-1 (534 aa).

Positions 1-17 (MIWYILVVGILLPQSLA) are cleaved as a signal peptide. A glycan (N-linked (GlcNAc...) asparagine) is linked at asparagine 113. A TPR repeat occupies 205–238 (VSVLDYLSYAVYQQGDLDKALLLTKKLLELDPEH). The tract at residues 258 to 277 (ANKSSSDDQSDQKTTLKKKG) is disordered. A glycan (N-linked (GlcNAc...) asparagine) is linked at asparagine 259. Residues 411–519 (TAEELQVANY…KWVSNKWLHE (109 aa)) enclose the Fe2OG dioxygenase domain. Fe cation contacts are provided by histidine 429, aspartate 431, and histidine 500. 2-oxoglutarate is bound at residue lysine 510.

The protein belongs to the P4HA family. As to quaternary structure, heterotetramer of two alpha-1 chains and two beta chains (P4HB)(the beta chain is the multi-functional PDI), where P4HB plays the role of a structural subunit; this tetramer catalyzes the formation of 4-hydroxyproline in collagen. It depends on Fe(2+) as a cofactor. L-ascorbate serves as cofactor.

It localises to the endoplasmic reticulum lumen. The enzyme catalyses L-prolyl-[collagen] + 2-oxoglutarate + O2 = trans-4-hydroxy-L-prolyl-[collagen] + succinate + CO2. Functionally, catalyzes the post-translational formation of 4-hydroxyproline in -Xaa-Pro-Gly- sequences in collagens and other proteins. This Bos taurus (Bovine) protein is Prolyl 4-hydroxylase subunit alpha-1 (P4HA1).